The primary structure comprises 268 residues: Eukaryotic translation initiation factor 3 subunit J (268 aa).

2 disordered regions span residues 1-117 and 219-242; these read MTPS…DLKH and NEKM…KTKV. The segment covering 26–44 has biased composition (acidic residues); that stretch reads DEEDEEVLDSWDAAEDSEV. Positions 40–95 form a coiled coil; it reads EDSEVEREKAAKAAEAKAKAEAEAAAKKKSKAQRIEEHKAERRKNAEADSEEDEDE. 2 stretches are compositionally biased toward basic and acidic residues: residues 45-65 and 72-86; these read EREK…EAAA and QRIE…KNAE. Residues 87–99 show a composition bias toward acidic residues; sequence ADSEEDEDEDEDE. Basic and acidic residues-rich tracts occupy residues 100–117 and 220–232; these read AEKR…DLKH and EKMR…DKGS.

Belongs to the eIF-3 subunit J family. In terms of assembly, component of the eukaryotic translation initiation factor 3 (eIF-3) complex.

The protein localises to the cytoplasm. In terms of biological role, component of the eukaryotic translation initiation factor 3 (eIF-3) complex, which is involved in protein synthesis of a specialized repertoire of mRNAs and, together with other initiation factors, stimulates binding of mRNA and methionyl-tRNAi to the 40S ribosome. The eIF-3 complex specifically targets and initiates translation of a subset of mRNAs involved in cell proliferation. In Aspergillus clavatus (strain ATCC 1007 / CBS 513.65 / DSM 816 / NCTC 3887 / NRRL 1 / QM 1276 / 107), this protein is Eukaryotic translation initiation factor 3 subunit J (hcr1).